A 208-amino-acid chain; its full sequence is Uracil phosphoribosyltransferase (208 aa).

5-phospho-alpha-D-ribose 1-diphosphate contacts are provided by residues arginine 78, arginine 103, and 130 to 138; that span reads DPMFATGGT. Uracil is bound by residues isoleucine 193 and 198 to 200; that span reads GDA. Residue aspartate 199 participates in 5-phospho-alpha-D-ribose 1-diphosphate binding.

Belongs to the UPRTase family. Requires Mg(2+) as cofactor.

It carries out the reaction UMP + diphosphate = 5-phospho-alpha-D-ribose 1-diphosphate + uracil. Its pathway is pyrimidine metabolism; UMP biosynthesis via salvage pathway; UMP from uracil: step 1/1. With respect to regulation, allosterically activated by GTP. Functionally, catalyzes the conversion of uracil and 5-phospho-alpha-D-ribose 1-diphosphate (PRPP) to UMP and diphosphate. In Campylobacter jejuni subsp. jejuni serotype O:2 (strain ATCC 700819 / NCTC 11168), this protein is Uracil phosphoribosyltransferase.